Here is a 364-residue protein sequence, read N- to C-terminus: Gap junction delta-4 protein (364 aa).

At 1–19 (MEKLNLLGFLIITLNCNVT) the chain is on the cytoplasmic side. The chain crosses the membrane as a helical span at residues 20–40 (IMGMIWLIVEVLLRMLVVVLA). Residues 41-76 (GSPIYEDEQERFICNTLQPGCANVCYDLFSPVSPLR) are Extracellular-facing. The chain crosses the membrane as a helical span at residues 77 to 97 (FWLVQSLALLLPSVVFGTYTL). Residues 98-128 (HRGAKLAAVGGACRPQVPDLSTAYLVHLLLR) lie on the Cytoplasmic side of the membrane. A helical membrane pass occupies residues 129 to 149 (MLLEAGLAFLHYFLFGFSVPA). The Extracellular portion of the chain corresponds to 150–173 (RVSCSHVPCSGAVDCYVSRPTEKS). Residues 174–194 (LLILFFWAVSALSFLLSLADL) traverse the membrane as a helical segment. The Cytoplasmic segment spans residues 195-364 (LWILPRRKTL…HLRTKKSEWV (170 aa)). The segment covering 331–340 (HLARHSSASK) has biased composition (polar residues). Positions 331–364 (HLARHSSASKPQAPCRLTTSGSAPHLRTKKSEWV) are disordered.

It belongs to the connexin family. Delta-type subfamily. A connexon is composed of a hexamer of connexins.

It is found in the cell membrane. It localises to the cell junction. The protein localises to the gap junction. In terms of biological role, one gap junction consists of a cluster of closely packed pairs of transmembrane channels, the connexons, through which materials of low MW diffuse from one cell to a neighboring cell. The protein is Gap junction delta-4 protein (Gjd4) of Mus musculus (Mouse).